Consider the following 429-residue polypeptide: MSQYQVVKGARDIFPDEIVRWHYVEDVVHRLASLYGYSEIRTPVFEYTELFQRSIGTTTDIVGKEMFSFLPDPQGRSITLRPEMTAGVMRAVLQKNLLSTAPIHKLFYLSELFRKERPQAGRQRQFSQFGAELLGVSSPAAVAEVITFMMQVFETLGIRGLKLRINTLGDSSDRARYREILRAYLAPFYDRLDLASRERFEKNPLRILDSKNPDMQEIIEGAPTLHDSLSHEALEDFEKVRFYLDSRSIAYDIDYRLVRGLDYYCHTAFEVTSPELGAQDAIGGGGRYDGLAKELGSSGDVPASGFAAGMERVLITMEKQGLFAALRPSGPKVYVVAQQHALLDHALQVAYRLRREGISTEVDLAGRSMKAQMRDANRMRACFALFIGEDEVVSGSYALKNLVTADQTAQSIETIIEMLNQYSGAEQGS.

This sequence belongs to the class-II aminoacyl-tRNA synthetase family. As to quaternary structure, homodimer.

It localises to the cytoplasm. The catalysed reaction is tRNA(His) + L-histidine + ATP = L-histidyl-tRNA(His) + AMP + diphosphate + H(+). This chain is Histidine--tRNA ligase, found in Chlorobium phaeobacteroides (strain DSM 266 / SMG 266 / 2430).